A 491-amino-acid polypeptide reads, in one-letter code: Probable CtpA-like serine protease (491 aa).

Residues 1–22 are disordered; the sequence is MNDHQKNHATSQDDNTKSTPSK. The segment covering 8-22 has biased composition (polar residues); it reads HATSQDDNTKSTPSK. Residues 31-51 form a helical membrane-spanning segment; it reads LWHFILVILGIILLTSIITVV. A PDZ domain is found at 119–201; sequence TKQFNEGVSG…TYVTLTIKRG (83 aa). Residues S324, D335, and K349 each act as charge relay system in the active site.

It belongs to the peptidase S41A family.

The protein resides in the cell membrane. This Staphylococcus epidermidis (strain ATCC 35984 / DSM 28319 / BCRC 17069 / CCUG 31568 / BM 3577 / RP62A) protein is Probable CtpA-like serine protease.